A 305-amino-acid chain; its full sequence is Nucleotide-binding protein Mjls_2437 (305 aa).

ATP is bound at residue 28–35 (GLSGAGRG). Position 79–82 (79–82 (DVRS)) interacts with GTP.

The protein belongs to the RapZ-like family.

Its function is as follows. Displays ATPase and GTPase activities. This is Nucleotide-binding protein Mjls_2437 from Mycobacterium sp. (strain JLS).